The chain runs to 740 residues: Ethylene receptor 1 (740 aa).

Helical transmembrane passes span isoleucine 23–valine 43, tryptophan 53–leucine 73, and valine 92–leucine 112. Cu cation-binding residues include cysteine 65 and histidine 69. The GAF domain maps to aspartate 158–leucine 307. The 239-residue stretch at valine 350–glutamate 588 folds into the Histidine kinase domain. Histidine 353 carries the post-translational modification Phosphohistidine; by autocatalysis. A Response regulatory domain is found at lysine 614–isoleucine 731. The residue at position 662 (aspartate 662) is a 4-aspartylphosphate.

It belongs to the ethylene receptor family. As to quaternary structure, homodimer; disulfide-linked. Cu cation is required as a cofactor. In terms of processing, activation probably requires a transfer of a phosphate group between a His in the transmitter domain and an Asp of the receiver domain.

Its subcellular location is the endoplasmic reticulum membrane. The enzyme catalyses ATP + protein L-histidine = ADP + protein N-phospho-L-histidine.. Its function is as follows. May act early in the ethylene signal transduction pathway, possibly as an ethylene receptor, or as a regulator of the pathway. The sequence is that of Ethylene receptor 1 (ETR1) from Cucumis sativus (Cucumber).